The primary structure comprises 186 residues: Sec-independent protein translocase protein TatB (186 aa).

The chain crosses the membrane as a helical span at residues 1–21 (MFDIGFSELILLMVLGLVVLG). Positions 162–186 (LSSYYPPDDIEIAPASKSQSSKTKS) are disordered. Polar residues predominate over residues 177–186 (SKSQSSKTKS).

It belongs to the TatB family. The Tat system comprises two distinct complexes: a TatABC complex, containing multiple copies of TatA, TatB and TatC subunits, and a separate TatA complex, containing only TatA subunits. Substrates initially bind to the TatABC complex, which probably triggers association of the separate TatA complex to form the active translocon.

Its subcellular location is the cell inner membrane. Its function is as follows. Part of the twin-arginine translocation (Tat) system that transports large folded proteins containing a characteristic twin-arginine motif in their signal peptide across membranes. Together with TatC, TatB is part of a receptor directly interacting with Tat signal peptides. TatB may form an oligomeric binding site that transiently accommodates folded Tat precursor proteins before their translocation. This chain is Sec-independent protein translocase protein TatB, found in Haemophilus influenzae (strain 86-028NP).